Here is an 81-residue protein sequence, read N- to C-terminus: Sulfur carrier protein TusA (81 aa).

The active-site Cysteine persulfide intermediate is cysteine 20.

This sequence belongs to the sulfur carrier protein TusA family.

Its subcellular location is the cytoplasm. Functionally, sulfur carrier protein which probably makes part of a sulfur-relay system. The chain is Sulfur carrier protein TusA from Colwellia psychrerythraea (strain 34H / ATCC BAA-681) (Vibrio psychroerythus).